We begin with the raw amino-acid sequence, 150 residues long: 6,7-dimethyl-8-ribityllumazine synthase (150 aa).

5-amino-6-(D-ribitylamino)uracil contacts are provided by residues Phe11, Val43–Asp45, and Ala67–Ile69. Position 72–73 (Ala72–Thr73) interacts with (2S)-2-hydroxy-3-oxobutyl phosphate. His75 functions as the Proton donor in the catalytic mechanism. Leu100 contacts 5-amino-6-(D-ribitylamino)uracil. Arg115 is a binding site for (2S)-2-hydroxy-3-oxobutyl phosphate.

It belongs to the DMRL synthase family.

It catalyses the reaction (2S)-2-hydroxy-3-oxobutyl phosphate + 5-amino-6-(D-ribitylamino)uracil = 6,7-dimethyl-8-(1-D-ribityl)lumazine + phosphate + 2 H2O + H(+). Its pathway is cofactor biosynthesis; riboflavin biosynthesis; riboflavin from 2-hydroxy-3-oxobutyl phosphate and 5-amino-6-(D-ribitylamino)uracil: step 1/2. Catalyzes the formation of 6,7-dimethyl-8-ribityllumazine by condensation of 5-amino-6-(D-ribitylamino)uracil with 3,4-dihydroxy-2-butanone 4-phosphate. This is the penultimate step in the biosynthesis of riboflavin. The protein is 6,7-dimethyl-8-ribityllumazine synthase of Pyrobaculum aerophilum (strain ATCC 51768 / DSM 7523 / JCM 9630 / CIP 104966 / NBRC 100827 / IM2).